Here is a 218-residue protein sequence, read N- to C-terminus: MQTCSGKGIKMAFLDVQSSSTPQSLPLLLFSHREGGGRGAGDPGAPAVVPAPVSAPRPASSPARSESRSPPLTLISRHITCCSCESPGDVLLSGRGGGGGGGGGARTGGGEGEDRRPRPDFSRVTAVAIPGWMEVESPPHPPPQPQVCPTPSQGAPGHGRAGLPEGKGPGGRDWLRSQSSRCSRATLFGHRAPSPAAPRRGRLPAPGFPSLHSAVSLF.

3 disordered regions span residues 30–71 (FSHR…RSPP), 93–120 (SGRG…PRPD), and 133–209 (MEVE…PGFP). The segment covering 43 to 71 (PGAPAVVPAPVSAPRPASSPARSESRSPP) has biased composition (low complexity). Residues 94-110 (GRGGGGGGGGGARTGGG) show a composition bias toward gly residues. A compositionally biased stretch (pro residues) spans 138-148 (PPHPPPQPQVC). Residues 156 to 171 (PGHGRAGLPEGKGPGG) are compositionally biased toward gly residues. The segment covering 191–209 (RAPSPAAPRRGRLPAPGFP) has biased composition (low complexity).

This is an uncharacterized protein from Homo sapiens (Human).